The sequence spans 456 residues: Elongator complex protein 4 (456 aa).

The span at 1–11 (MSFRKRGEILN) shows a compositional bias: basic and acidic residues. Residues 1-91 (MSFRKRGEIL…SQPTTSTGSA (91 aa)) form a disordered region. Arg-13 is modified (omega-N-methylarginine). Residues 18-27 (RGPLLRGPPR) are compositionally biased toward low complexity. Residues 57–66 (NIADESKTKM) are compositionally biased toward basic and acidic residues. Residues 77–90 (PSPATSQPTTSTGS) show a composition bias toward low complexity. Position 222 is a phosphoserine (Ser-222). A disordered region spans residues 424 to 444 (EGSAASEQSHSHSHSDEISHN). The segment covering 432-442 (SHSHSHSDEIS) has biased composition (basic and acidic residues).

The protein belongs to the ELP4 family. As to quaternary structure, component of the elongator complex which consists of ELP1/IKI3, ELP2, ELP3, ELP4, ELP5/IKI1 and ELP6. The elongator complex is composed of two copies of the Elp123 subcomplex (composed of ELP1/IKI3, ELP2 and ELP3) and two copies of the Elp456 subcomplex (composed of ELP4, ELP5/IKI1 and ELP6). The Elp123 subcomplex forms a two-lobed scaffold, which binds the Elp456 subcomplex asymmetrically. In each lobe, ELP2 is tightly sandwiched between ELP1/IKI3 and ELP3. The Elp123 subcomplex binds tRNA through ELP1/IKI3 and ELP3 and can bind 2 tRNAs simultaneously. tRNA-binding by the Elp123 subcomplex induces conformational rearrangements which precisely position the targeted anticodon base in the active site. The Elp456 subcomplex binds tRNA and has ATPase activity. ELP4 interacts with KTI12.

It is found in the cytoplasm. The protein resides in the nucleus. It functions in the pathway tRNA modification; 5-methoxycarbonylmethyl-2-thiouridine-tRNA biosynthesis. In terms of biological role, component of the elongator complex, a multiprotein complex which is required for multiple tRNA modifications, including mcm5U (5-methoxycarbonylmethyl uridine), mcm5s2U (5-methoxycarbonylmethyl-2-thiouridine), and ncm5U (5-carbamoylmethyl uridine). The elongator complex catalyzes formation of carboxymethyluridine in the wobble base at position 34 in tRNAs. It functions as a gamma-toxin target (TOT); disruption of the complex confers resistance to Kluyveromyces lactis toxin zymocin (pGKL1 killer toxin). May also be involved in sensitivity to Pichia inositovora toxin. This is Elongator complex protein 4 from Saccharomyces cerevisiae (strain ATCC 204508 / S288c) (Baker's yeast).